The chain runs to 191 residues: Glutathione-independent glyoxalase DJ-1 (191 aa).

Catalysis depends on residues glutamate 16, cysteine 111, and histidine 130.

This sequence belongs to the peptidase C56 family.

It is found in the cytoplasm. The protein localises to the nucleus. The enzyme catalyses methylglyoxal + H2O = (R)-lactate + H(+). Functionally, catalyzes the conversion of methylglyoxal (MG) to D-lactate in a single glutathione (GSH)-independent step. May play a role in detoxifying endogenously produced glyoxals. Involved in protection against reactive oxygen species (ROS). This Schizosaccharomyces pombe (strain 972 / ATCC 24843) (Fission yeast) protein is Glutathione-independent glyoxalase DJ-1.